We begin with the raw amino-acid sequence, 424 residues long: Tyrosine--tRNA ligase (424 aa).

Residue tyrosine 37 coordinates L-tyrosine. Residues 42 to 51 carry the 'HIGH' region motif; that stretch reads PTADSLHLGH. L-tyrosine contacts are provided by tyrosine 175 and glutamine 179. The 'KMSKS' region signature appears at 235-239; sequence KFGKT. Lysine 238 serves as a coordination point for ATP. Residues 357 to 414 form the S4 RNA-binding domain; the sequence is ADLMQALVDAELQPSRGQARKTIASNAVTINGEKQSDPEYIFNDEDRLFGRYTLLRRG.

The protein belongs to the class-I aminoacyl-tRNA synthetase family. TyrS type 1 subfamily. As to quaternary structure, homodimer.

The protein resides in the cytoplasm. The enzyme catalyses tRNA(Tyr) + L-tyrosine + ATP = L-tyrosyl-tRNA(Tyr) + AMP + diphosphate + H(+). In terms of biological role, catalyzes the attachment of tyrosine to tRNA(Tyr) in a two-step reaction: tyrosine is first activated by ATP to form Tyr-AMP and then transferred to the acceptor end of tRNA(Tyr). In Salmonella enteritidis PT4 (strain P125109), this protein is Tyrosine--tRNA ligase.